Reading from the N-terminus, the 473-residue chain is Sorting nexin-17 (473 aa).

The PX domain maps to 1–108; it reads MHFSIPETEV…SFLRKAQQET (108 aa). A 1,2-diacyl-sn-glycero-3-phospho-(1D-myo-inositol-3-phosphate) is bound by residues Arg-35, Ser-37, Lys-61, and Arg-74. The 92-residue stretch at 114-205 folds into the Ras-associating domain; the sequence is EEVQLEIYLS…YRIILRKSYW (92 aa). The segment at 114–433 is FERM-like; the sequence is EEVQLEIYLS…DPNREQVVKL (320 aa). Residues 269 to 433 are PTB-like F3 module; it reads GYIKFDPCIT…DPNREQVVKL (165 aa). The segment at 391-431 is disordered; sequence SIKKQMQKKRLNGSLQRSDSQQAVKSPPILDSPDPNREQVV. A compositionally biased stretch (polar residues) spans 403-414; that stretch reads GSLQRSDSQQAV.

It belongs to the sorting nexin family. In terms of assembly, monomer. Interacts with CCDC22, CCDC93, DSCR3 and VPS35L; the interaction with DSCR3 is direct and associates SNX17 with the retriever and CCC complexes.

It localises to the cytoplasm. It is found in the early endosome. The protein localises to the cytoplasmic vesicle membrane. In terms of biological role, critical regulator of endosomal recycling of numerous surface proteins, including integrins, signaling receptor and channels. Binds to NPxY sequences in the cytoplasmic tails of target cargos. Associates with retriever and CCC complexes to prevent lysosomal degradation and promote cell surface recycling of numerous cargos such as integrins ITGB1, ITGB5 and their associated alpha subunits. Also required for maintenance of normal cell surface levels of APP and LRP1. Interacts with membranes containing phosphatidylinositol 3-phosphate (PtdIns(3P)). The polypeptide is Sorting nexin-17 (snx17) (Danio rerio (Zebrafish)).